A 319-amino-acid polypeptide reads, in one-letter code: Beta-ketoacyl-[acyl-carrier-protein] synthase III (319 aa).

Residues C113 and H246 contribute to the active site. The interval 247 to 251 (QANIR) is ACP-binding. N276 is a catalytic residue.

The protein belongs to the thiolase-like superfamily. FabH family. Homodimer.

The protein localises to the cytoplasm. The catalysed reaction is malonyl-[ACP] + acetyl-CoA + H(+) = 3-oxobutanoyl-[ACP] + CO2 + CoA. It participates in lipid metabolism; fatty acid biosynthesis. In terms of biological role, catalyzes the condensation reaction of fatty acid synthesis by the addition to an acyl acceptor of two carbons from malonyl-ACP. Catalyzes the first condensation reaction which initiates fatty acid synthesis and may therefore play a role in governing the total rate of fatty acid production. Possesses both acetoacetyl-ACP synthase and acetyl transacylase activities. Its substrate specificity determines the biosynthesis of branched-chain and/or straight-chain of fatty acids. The chain is Beta-ketoacyl-[acyl-carrier-protein] synthase III from Ehrlichia canis (strain Jake).